The following is a 160-amino-acid chain: SsrA-binding protein (160 aa).

It belongs to the SmpB family.

The protein localises to the cytoplasm. Its function is as follows. Required for rescue of stalled ribosomes mediated by trans-translation. Binds to transfer-messenger RNA (tmRNA), required for stable association of tmRNA with ribosomes. tmRNA and SmpB together mimic tRNA shape, replacing the anticodon stem-loop with SmpB. tmRNA is encoded by the ssrA gene; the 2 termini fold to resemble tRNA(Ala) and it encodes a 'tag peptide', a short internal open reading frame. During trans-translation Ala-aminoacylated tmRNA acts like a tRNA, entering the A-site of stalled ribosomes, displacing the stalled mRNA. The ribosome then switches to translate the ORF on the tmRNA; the nascent peptide is terminated with the 'tag peptide' encoded by the tmRNA and targeted for degradation. The ribosome is freed to recommence translation, which seems to be the essential function of trans-translation. The protein is SsrA-binding protein of Mycobacterium bovis (strain ATCC BAA-935 / AF2122/97).